Reading from the N-terminus, the 104-residue chain is Phycoerythrin alpha-2 chain, chloroplastic (104 aa).

The N-terminal 37 residues, 1 to 37 (MSAKIIAFSAVVATASAFAPTAGFVPRLRSGATSVNM), are a transit peptide targeting the chloroplast. Lys-41 is modified (5-hydroxylysine). Residues Cys-56 and Arg-58 each contribute to the 15,16-dihydrobiliverdin site. The tract at residues 61–63 (KEY) is 15,16-dihydrobiliverdin chromophore. Position 78 (Lys-78) interacts with 15,16-dihydrobiliverdin.

This sequence belongs to the phycoerythrin family. As to quaternary structure, heterotetramer of 2 different alpha chains and 2 identical beta chains. The subunit composition could comprise of any combination of 2 out of 4 different alpha units with an invariant beta unit. Contains one covalently linked 15,16-dihydrobiliverdin chromophore.

The protein resides in the plastid. It is found in the chloroplast thylakoid membrane. In terms of biological role, light-harvesting photosynthetic tetrapyrrole chromophore-protein from the phycobiliprotein complex. This chain is Phycoerythrin alpha-2 chain, chloroplastic (cpeA2), found in Rhodomonas sp. (strain CS 24) (Chroomonas sp. (strain CS24)).